The sequence spans 776 residues: Lysyl oxidase homolog 2 (776 aa).

Positions 1 to 25 are cleaved as a signal peptide; it reads MEIPFGSCLYSCLALLVLLPSLSLA. SRCR domains lie at 61–162, 191–305, 329–428, and 438–546; these read VRLA…VVCS, IRPI…VSCV, VRLR…VRCN, and VRLN…VACS. Disulfide bonds link C87–C151, C100–C161, C131–C141, C221–C294, C234–C304, C268–C278, C354–C417, C367–C427, and C398–C408. The N-linked (GlcNAc...) asparagine glycan is linked to N267. N291 is a glycosylation site (N-linked (GlcNAc...) asparagine). A glycan (N-linked (GlcNAc...) asparagine) is linked at N458. 3 disulfide bridges follow: C467/C532, C480/C545, and C514/C524. Residues 550–753 form a lysyl-oxidase like region; sequence PDLVLNAEIV…WMYNCHVGGA (204 aa). The Ca(2+) site is built by D551 and L552. 4 disulfide bridges follow: C575-C627, C581-C697, C659-C675, and C665-C687. Cu cation-binding residues include H628, H630, and H632. An N-linked (GlcNAc...) asparagine glycan is attached at N646. The segment at residues 655–691 is a cross-link (lysine tyrosylquinone (Lys-Tyr)); sequence KASFCLEDTECEGDIQKSYECANFGEQGITMGCWDMY. Y691 carries the post-translational modification 2',4',5'-topaquinone. Residues E724, D726, N729, and N730 each coordinate Ca(2+). C734 and C748 are oxidised to a cystine.

The protein belongs to the lysyl oxidase family. Component of some chromatin repressor complex. Interacts with SNAI1. Interacts with TAF10. Interacts with HSPA5. Interacts with EFEMP2. The cofactor is Cu cation. Lysine tyrosylquinone residue is required as a cofactor. The lysine tyrosylquinone cross-link (LTQ) is generated by condensation of the epsilon-amino group of a lysine with a topaquinone produced by oxidation of tyrosine. Post-translationally, N-glycosylated. N-glycosylation on Asn-458 and Asn-646 may be essential for proper folding and secretion; may be composed of a fucosylated carbohydrates attached to a trimannose N-linked glycan core.

Its subcellular location is the secreted. The protein resides in the extracellular space. It localises to the extracellular matrix. The protein localises to the basement membrane. It is found in the nucleus. Its subcellular location is the chromosome. The protein resides in the endoplasmic reticulum. The catalysed reaction is L-lysyl-[protein] + O2 + H2O = (S)-2-amino-6-oxohexanoyl-[protein] + H2O2 + NH4(+). With respect to regulation, specifically inhibited by a mouse monoclonal antibody AB0023, inhibition occurs in a non-competitive manner. Mediates the post-translational oxidative deamination of lysine residues on target proteins leading to the formation of deaminated lysine (allysine). Acts as a transcription corepressor and specifically mediates deamination of trimethylated 'Lys-4' of histone H3 (H3K4me3), a specific tag for epigenetic transcriptional activation. Shows no activity against histone H3 when it is trimethylated on 'Lys-9' (H3K9me3) or 'Lys-27' (H3K27me3) or when 'Lys-4' is monomethylated (H3K4me1) or dimethylated (H3K4me2). Also mediates deamination of methylated TAF10, a member of the transcription factor IID (TFIID) complex, which induces release of TAF10 from promoters, leading to inhibition of TFIID-dependent transcription. LOXL2-mediated deamination of TAF10 results in transcriptional repression of genes required for embryonic stem cell pluripotency including POU5F1/OCT4, NANOG, KLF4 and SOX2. Involved in epithelial to mesenchymal transition (EMT) via interaction with SNAI1 and participates in repression of E-cadherin CDH1, probably by mediating deamination of histone H3. During EMT, involved with SNAI1 in negatively regulating pericentromeric heterochromatin transcription. SNAI1 recruits LOXL2 to pericentromeric regions to oxidize histone H3 and repress transcription which leads to release of heterochromatin component CBX5/HP1A, enabling chromatin reorganization and acquisition of mesenchymal traits. Interacts with the endoplasmic reticulum protein HSPA5 which activates the IRE1-XBP1 pathway of the unfolded protein response, leading to expression of several transcription factors involved in EMT and subsequent EMT induction. When secreted into the extracellular matrix, promotes cross-linking of extracellular matrix proteins by mediating oxidative deamination of peptidyl lysine residues in precursors to fibrous collagen and elastin. Acts as a regulator of sprouting angiogenesis, probably via collagen IV scaffolding. Acts as a regulator of chondrocyte differentiation, probably by regulating expression of factors that control chondrocyte differentiation. This chain is Lysyl oxidase homolog 2 (Loxl2), found in Rattus norvegicus (Rat).